A 44-amino-acid chain; its full sequence is Mu-conotoxin-like Cal 12.1.1e (44 aa).

4 disulfides stabilise this stretch: Cys-3-Cys-16, Cys-11-Cys-28, Cys-18-Cys-33, and Cys-27-Cys-38. A 6'-bromotryptophan modification is found at Trp-17. At Pro-23 the chain carries 4-hydroxyproline. 6'-bromotryptophan is present on residues Trp-36 and Trp-37. The residue at position 39 (Pro-39) is a 4-hydroxyproline. Trp-43 bears the 6'-bromotryptophan mark.

As to expression, expressed by the venom duct.

The protein localises to the secreted. Mu-conotoxins block voltage-gated sodium channels. This toxin reversibly blocks voltage-gated sodium channel in cephalopods, with no alteration in the voltage dependence of sodium conductance or on the kinetics of inactivation. The chain is Mu-conotoxin-like Cal 12.1.1e from Californiconus californicus (California cone).